We begin with the raw amino-acid sequence, 409 residues long: Nucleoprotein (409 aa).

Disordered regions lie at residues 1-32 (MASGKATGKTDAPAPVIKLGGPRPPKVGSSGN), 44-69 (LNSPQPKFEGSGVPDNENLKTSQQHG), 121-194 (ADVK…GSED), and 238-259 (VDQVFGPRTKGKEGNFGDDKMN). Positions 29–160 (SSGNASWFQA…GNFRWDFIPL (132 aa)) are RNA-binding. In terms of domain architecture, CoV N NTD spans 31–156 (GNASWFQAIK…GGPDGNFRWD (126 aa)). Over residues 162 to 179 (RGRSGRSTAASSAASSRP) the composition is skewed to low complexity. 2 stretches are compositionally biased toward basic and acidic residues: residues 180 to 192 (PSREGSRGRRSGS) and 247 to 259 (KGKEGNFGDDKMN). Ser-190 and Ser-192 each carry phosphoserine; by host. The CoV N CTD domain occupies 215–331 (TKAKADEMAH…QCVDGVGTRP (117 aa)). The tract at residues 226–333 (RYCKRTIPPG…VDGVGTRPKD (108 aa)) is dimerization. A disulfide bridge links Cys-320 with Cys-323. Residues 326–409 (GVGTRPKDDE…GDSALGENEL (84 aa)) form a disordered region. Residues 341-356 (RSSSRPATRTSSPAPR) are compositionally biased toward low complexity. The span at 358 to 367 (QRLKKEKRPK) shows a compositional bias: basic residues. Residues 368–384 (KQDDEVDKALTSDEERN) show a composition bias toward basic and acidic residues. Thr-378 bears the Phosphothreonine; by host mark. A Phosphoserine; by host modification is found at Ser-379.

The protein belongs to the gammacoronavirus nucleocapsid protein family. In terms of assembly, homooligomer. Both monomeric and oligomeric forms interact with RNA. Interacts with protein M. Interacts with NSP3; this interaction serves to tether the genome to the newly translated replicase-transcriptase complex at a very early stage of infection. ADP-ribosylated. The ADP-ribosylation is retained in the virion during infection. In terms of processing, phosphorylated on serine and threonine residues.

The protein resides in the virion. It is found in the host endoplasmic reticulum-Golgi intermediate compartment. It localises to the host Golgi apparatus. Functionally, packages the positive strand viral genome RNA into a helical ribonucleocapsid (RNP) and plays a fundamental role during virion assembly through its interactions with the viral genome and membrane protein M. Plays an important role in enhancing the efficiency of subgenomic viral RNA transcription as well as viral replication. The sequence is that of Nucleoprotein from Gallus gallus (Chicken).